Here is a 122-residue protein sequence, read N- to C-terminus: FMN-binding protein (122 aa).

In terms of assembly, monomer and homodimer. FMN serves as cofactor.

The protein localises to the cytoplasm. Functionally, functions as a redox protein with a potential of -325 mV. This chain is FMN-binding protein, found in Nitratidesulfovibrio vulgaris (strain DSM 19637 / Miyazaki F) (Desulfovibrio vulgaris).